The following is a 120-amino-acid chain: Chemokine vCXCL1 (120 aa).

The protein belongs to the intercrine alpha (chemokine CxC) family. As to quaternary structure, interacts with host CXCR1 and CXCR2.

Its function is as follows. Acts as a functional chemokine, inducing calcium mobilization, chemotaxis, and degranulation of neutrophils. Contributes to the induction of neutrophil chemotaxis by interacting with host CXCR1 and CXCR2 receptors. The protein is Chemokine vCXCL1 (UL146) of Human cytomegalovirus (strain Merlin) (HHV-5).